A 196-amino-acid polypeptide reads, in one-letter code: MIEQSLDNLILASSSERRVALLKQINIKPGLVLPADIDESPLKKELPKDYSIRMAKSKAEKIQSANPNYFVLGVDTVVACGRRILLKAENVEQAEKCVRLLSGRRHRVYTSVCLLIPDQSKQHIRTVVTIVKFKRLSEQEIKYYLASEEWKNRAGGCNIQGLAGMFVLFLRGSYSSVIGLPLHETNCLLSNYFNLY.

Aspartate 75 (proton acceptor) is an active-site residue.

The protein belongs to the Maf family. YhdE subfamily. Requires a divalent metal cation as cofactor.

The protein localises to the cytoplasm. The catalysed reaction is dTTP + H2O = dTMP + diphosphate + H(+). The enzyme catalyses UTP + H2O = UMP + diphosphate + H(+). Its function is as follows. Nucleoside triphosphate pyrophosphatase that hydrolyzes dTTP and UTP. May have a dual role in cell division arrest and in preventing the incorporation of modified nucleotides into cellular nucleic acids. The sequence is that of dTTP/UTP pyrophosphatase from Wolbachia pipientis subsp. Culex pipiens (strain wPip).